The following is a 269-amino-acid chain: Putative aga operon transcriptional repressor (269 aa).

The 56-residue stretch at 15–70 folds into the HTH deoR-type domain; that stretch reads TSERREQIIQRLRQQGSVQVNDLSALYGVSTVTIRNDLAFLEKQGIAVRAYGGALI. Positions 32 to 51 form a DNA-binding region, H-T-H motif; sequence VQVNDLSALYGVSTVTIRND.

In terms of biological role, probable repressor for the aga operon for N-acetyl galactosamine transport and metabolism. The polypeptide is Putative aga operon transcriptional repressor (agaR) (Escherichia coli O157:H7).